The primary structure comprises 436 residues: Enolase (436 aa).

Gln167 lines the (2R)-2-phosphoglycerate pocket. Glu209 serves as the catalytic Proton donor. Residues Asp246, Glu291, and Asp318 each coordinate Mg(2+). The (2R)-2-phosphoglycerate site is built by Lys343, Arg372, Ser373, and Lys394. Catalysis depends on Lys343, which acts as the Proton acceptor.

Belongs to the enolase family. Component of the RNA degradosome, a multiprotein complex involved in RNA processing and mRNA degradation. It depends on Mg(2+) as a cofactor.

The protein localises to the cytoplasm. Its subcellular location is the secreted. It is found in the cell surface. The catalysed reaction is (2R)-2-phosphoglycerate = phosphoenolpyruvate + H2O. It functions in the pathway carbohydrate degradation; glycolysis; pyruvate from D-glyceraldehyde 3-phosphate: step 4/5. Catalyzes the reversible conversion of 2-phosphoglycerate (2-PG) into phosphoenolpyruvate (PEP). It is essential for the degradation of carbohydrates via glycolysis. The protein is Enolase of Haemophilus influenzae (strain ATCC 51907 / DSM 11121 / KW20 / Rd).